The following is a 236-amino-acid chain: Ribonuclease HII (236 aa).

The 194-residue stretch at 21–214 folds into the RNase H type-2 domain; sequence RTVAGVDEVG…LDALPRWQHL (194 aa). A divalent metal cation contacts are provided by aspartate 27, glutamate 28, and aspartate 119.

It belongs to the RNase HII family. Requires Mn(2+) as cofactor. Mg(2+) is required as a cofactor.

Its subcellular location is the cytoplasm. The catalysed reaction is Endonucleolytic cleavage to 5'-phosphomonoester.. In terms of biological role, endonuclease that specifically degrades the RNA of RNA-DNA hybrids. The protein is Ribonuclease HII of Streptomyces griseus subsp. griseus (strain JCM 4626 / CBS 651.72 / NBRC 13350 / KCC S-0626 / ISP 5235).